We begin with the raw amino-acid sequence, 97 residues long: Small ribosomal subunit protein uS19 (97 aa).

Belongs to the universal ribosomal protein uS19 family.

Its function is as follows. Protein S19 forms a complex with S13 that binds strongly to the 16S ribosomal RNA. The sequence is that of Small ribosomal subunit protein uS19 from Pelagibacter ubique (strain HTCC1062).